The chain runs to 239 residues: MATPHINAEMGDFADVVLMPGDPLRAKFIAETFLDDAREVNNVRGMLGFTGTYKGRKISVMGHGMGIPSCSIYAKELITEFGVKKIIRVGSCGAVREDVKLRDVVIGMGACTDSKVNRMRFKDHDYAAIADFDMVRNAVDAAKARDVSVRVGNIFSADLFYTPDPQMFDVMEKYGILGVEMEAAGIYGVAAEFGAKALAICTVSDHIRTGAQTTSEERQTTFNEMIEIALESVLLGDNE.

His5 serves as a coordination point for a purine D-ribonucleoside. Phosphate is bound by residues Gly21, Arg25, Arg44, and 88-91 (RVGS). A purine D-ribonucleoside-binding positions include 180-182 (EME) and 204-205 (SD). The active-site Proton donor is the Asp205.

Belongs to the PNP/UDP phosphorylase family. As to quaternary structure, homohexamer; trimer of homodimers.

It carries out the reaction a purine D-ribonucleoside + phosphate = a purine nucleobase + alpha-D-ribose 1-phosphate. The enzyme catalyses a purine 2'-deoxy-D-ribonucleoside + phosphate = a purine nucleobase + 2-deoxy-alpha-D-ribose 1-phosphate. Its function is as follows. Catalyzes the reversible phosphorolytic breakdown of the N-glycosidic bond in the beta-(deoxy)ribonucleoside molecules, with the formation of the corresponding free purine bases and pentose-1-phosphate. The sequence is that of Purine nucleoside phosphorylase DeoD-type from Pectobacterium atrosepticum (strain SCRI 1043 / ATCC BAA-672) (Erwinia carotovora subsp. atroseptica).